Consider the following 102-residue polypeptide: Acid shock protein (102 aa).

An N-terminal signal peptide occupies residues 1-21 (MKKVLALVVAAAMGLSSAAFA). Low complexity predominate over residues 22-41 (AETATTPAPTATTTKAAPAK). Positions 22–58 (AETATTPAPTATTTKAAPAKTTHHKKQHKAAPAQKAQ) are excised as a propeptide. A disordered region spans residues 22-102 (AETATTPAPT…PAKPAAQPAA (81 aa)). The segment covering 80-90 (AAKKHAKKHSH) has biased composition (basic residues). Positions 91–102 (QQPAKPAAQPAA) are enriched in low complexity.

Belongs to the Asr family. Proteolytic processing gives rise to the active protein.

The protein resides in the periplasm. Functionally, required for growth and/or survival at acidic conditions. The chain is Acid shock protein from Escherichia coli O17:K52:H18 (strain UMN026 / ExPEC).